The sequence spans 92 residues: MIVKPIGERVLLKHQKKEEVTKGGIYIPESARQEKKEGIVVAVGTFEDGKELPLKKDDHVIYGGYQADEIEIDDEKYIFVDFKDILATVVEE.

This sequence belongs to the GroES chaperonin family. In terms of assembly, heptamer of 7 subunits arranged in a ring. Interacts with the chaperonin GroEL.

The protein localises to the cytoplasm. Its function is as follows. Together with the chaperonin GroEL, plays an essential role in assisting protein folding. The GroEL-GroES system forms a nano-cage that allows encapsulation of the non-native substrate proteins and provides a physical environment optimized to promote and accelerate protein folding. GroES binds to the apical surface of the GroEL ring, thereby capping the opening of the GroEL channel. This chain is Co-chaperonin GroES, found in Methanosarcina mazei (strain ATCC BAA-159 / DSM 3647 / Goe1 / Go1 / JCM 11833 / OCM 88) (Methanosarcina frisia).